Here is a 435-residue protein sequence, read N- to C-terminus: 3-phosphoshikimate 1-carboxyvinyltransferase (435 aa).

3-phosphoshikimate-binding residues include Lys22, Ser23, and Arg27. Lys22 provides a ligand contact to phosphoenolpyruvate. Phosphoenolpyruvate is bound by residues Gly94 and Arg122. 3-phosphoshikimate-binding residues include Ser166, Gln168, Asp314, and Lys341. Residue Gln168 coordinates phosphoenolpyruvate. Asp314 (proton acceptor) is an active-site residue. 2 residues coordinate phosphoenolpyruvate: Arg345 and Arg388.

The protein belongs to the EPSP synthase family. Monomer.

The protein resides in the cytoplasm. The catalysed reaction is 3-phosphoshikimate + phosphoenolpyruvate = 5-O-(1-carboxyvinyl)-3-phosphoshikimate + phosphate. The protein operates within metabolic intermediate biosynthesis; chorismate biosynthesis; chorismate from D-erythrose 4-phosphate and phosphoenolpyruvate: step 6/7. In terms of biological role, catalyzes the transfer of the enolpyruvyl moiety of phosphoenolpyruvate (PEP) to the 5-hydroxyl of shikimate-3-phosphate (S3P) to produce enolpyruvyl shikimate-3-phosphate and inorganic phosphate. The protein is 3-phosphoshikimate 1-carboxyvinyltransferase of Ruthia magnifica subsp. Calyptogena magnifica.